Consider the following 257-residue polypeptide: AN1-type zinc finger protein 2B (257 aa).

2 AN1-type zinc fingers span residues Pro-4 to Ile-52 and Lys-94 to Ser-142. 16 residues coordinate Zn(2+): Cys-10, Cys-15, Cys-25, Cys-28, Cys-33, His-36, His-42, Cys-44, Cys-100, Cys-105, Cys-115, Cys-118, Cys-123, His-126, His-132, and Cys-134. A VCP/p97-interacting motif (VIM) region spans residues Thr-141 to Arg-151. Residues Ala-152–Arg-184 form a disordered region. Low complexity predominate over residues Leu-155–Pro-179. Phosphoserine; by MAPK14 occurs at positions 163, 173, and 187. UIM domains lie at Ser-197 to Gln-216 and Gln-221 to Gln-240. Cysteine methyl ester is present on Cys-254. A lipid anchor (S-geranylgeranyl cysteine) is attached at Cys-254. A CAAX motif motif is present at residues Cys-254–Cys-257. The propeptide at Ser-255–Cys-257 is removed in mature form.

As to quaternary structure, binds 'Lys-48'-linked polyubiquitin chains of ubiquitinated proteins. Associates with the proteasome complex; upon exposure to arsenite. Interacts (via VIM motif) with VCP; the interaction is direct. Interacts with BAG6. Interacts with IGF1R (nascent precursor form). Interacts with DERL1, FAF2, NPLOC4 and UFD1; probably through VCP. In terms of processing, phosphorylated by MAPK14. Phosphorylation has no effect on association with the proteasome complex.

Its subcellular location is the endoplasmic reticulum membrane. Its function is as follows. Plays a role in protein homeostasis by regulating both the translocation and the ubiquitin-mediated proteasomal degradation of nascent proteins at the endoplasmic reticulum. It is involved in the regulation of signal-mediated translocation of proteins into the endoplasmic reticulum. It also plays a role in the ubiquitin-mediated proteasomal degradation of proteins for which signal-mediated translocation to the endoplasmic reticulum has failed. May therefore function in the endoplasmic reticulum stress-induced pre-emptive quality control, a mechanism that selectively attenuates the translocation of newly synthesized proteins into the endoplasmic reticulum and reroutes them to the cytosol for proteasomal degradation. By controlling the steady-state expression of the IGF1R receptor, indirectly regulates the insulin-like growth factor receptor signaling pathway. The polypeptide is AN1-type zinc finger protein 2B (Mus musculus (Mouse)).